The chain runs to 821 residues: Calpain-3 (821 aa).

A disordered region spans residues 1–37; that stretch reads MPTVISPTVAPRTGAEPRSPGPVPHPAQGKTTEAGGG. In terms of domain architecture, Calpain catalytic spans 74–417; it reads LYLDPEFPPD…FTKLEICNLT (344 aa). Active-site residues include cysteine 129, histidine 334, and asparagine 358. The domain III stretch occupies residues 418–586; it reads ADALESDKLQ…KRNLSEEAEN (169 aa). The tract at residues 587-649 is linker; it reads TISVDRPVKK…RPGHTDQESE (63 aa). Residues 603 to 651 are disordered; that stretch reads IFVSDRANSNKELGVDQEAEEGKDKTGPDKQGESPQPRPGHTDQESEEQ. Positions 622–634 are enriched in basic and acidic residues; that stretch reads EEGKDKTGPDKQG. EF-hand domains lie at 649 to 683, 692 to 725, 722 to 757, and 787 to 821; these read EEQQQFRNIFRQIAGDDMEICADELKNVLNTVVNK, FTLESCRSMIALMDTDGSGRLNLQEFHHLWKKIK, KKIKAWQKIFKHYDTDHSGTINSYEMRNAVNDAGFH, and VRLEGMFRAFHAFDKDGDGIIKLNVLEWLQLTMYA. Residues 650–820 are domain IV; sequence EQQQFRNIFR…VLEWLQLTMY (171 aa). Ca(2+) contacts are provided by alanine 662, aspartate 665, glutamate 667, glutamate 672, aspartate 705, aspartate 707, serine 709, arginine 711, glutamate 716, aspartate 735, aspartate 737, serine 739, threonine 741, glutamate 746, aspartate 800, aspartate 802, aspartate 804, and isoleucine 806.

It belongs to the peptidase C2 family. In terms of assembly, homodimer; via EF-hand domain 4. Interacts with TTN/titin. Interacts with CMYA5; this interaction, which results in CMYA5 proteolysis, may protect CAPN3 from autolysis. Interacts with SIMC1. Interacts with UTP25; the interaction is required for CAPN3 translocation to the nucleolus. In terms of tissue distribution, skeletal muscle.

The protein localises to the cytoplasm. The protein resides in the nucleus. Its subcellular location is the nucleolus. It catalyses the reaction Broad endopeptidase activity.. Activated by micromolar concentrations of calcium and inhibited by calpastatin. In terms of biological role, calcium-regulated non-lysosomal thiol-protease. Proteolytically cleaves CTBP1 at 'His-399'. Mediates, with UTP25, the proteasome-independent degradation of p53/TP53. The protein is Calpain-3 (Capn3) of Rattus norvegicus (Rat).